The following is a 425-amino-acid chain: Sensor histidine kinase NarS (425 aa).

Helical transmembrane passes span 42–62, 71–91, 107–127, 130–150, 155–175, and 181–201; these read IASVLRIGVVGLMVAAMVVGT, IVLIGVYAVAALWALLLAYSA, LEPFAFTAVDVLILTGFQLLS, GIYPLLIMILLPVLVGLDVST, VVLACTLVGFAVAVLGDPVML, and PETIFRFALYAFLCATALMVV. The Histidine kinase domain occupies 224–425; it reads QTMTASEVLQ…HVCVELPLKR (202 aa). At histidine 241 the chain carries Phosphohistidine; by autocatalysis.

Autophosphorylated on His-241.

The protein resides in the cell membrane. The catalysed reaction is ATP + protein L-histidine = ADP + protein N-phospho-L-histidine.. Member of the two-component regulatory system NarS/NarL involved in gene expression during aerobic nitrate metabolism. Plays therefore a crucial role in anaerobic survival of mycobacteria in host. Functions as a sensor protein kinase which is autophosphorylated at a histidine residue and transfers its phosphate group to the conserved aspartic acid residue in the regulatory domain of NarL. In turn, NarL binds to the upstream promoter regions of target genes to regulate their expression during aerobic nitrate metabolism. The sequence is that of Sensor histidine kinase NarS from Mycobacterium tuberculosis (strain ATCC 25618 / H37Rv).